The primary structure comprises 582 residues: NAB transcription cofactor mab-10 (582 aa).

Positions 1 to 70 (MSSSSSSSLP…SSSSQRQSTS (70 aa)) are enriched in low complexity. 4 disordered regions span residues 1–84 (MSSS…MPTP), 257–287 (SDQQSSSTSSVRSVLPSTSSNTSHPELPAGI), 333–365 (PPSSTSIQQPSTSFGRSSSITGQEKEGSSSPFL), and 516–582 (SRKR…LPES). The NCD1 stretch occupies residues 83-161 (TPTTLSEWQL…EYSQDQTAFN (79 aa)). 2 stretches are compositionally biased toward low complexity: residues 257–276 (SDQQSSSTSSVRSVLPSTSS) and 333–345 (PPSSTSIQQPSTS). The interval 396–519 (LSTAQISRLA…GYNYAKSRKR (124 aa)) is NCD2. The segment covering 573-582 (EKMKGELPES) has biased composition (basic and acidic residues).

The protein belongs to the NAB family. As to quaternary structure, interacts with transcription factor lin-29 (via C-terminus).

It localises to the nucleus. Transcriptional cofactor. Heterochronic protein, involved in timing of a subset of differentiation events during the larval-to-adult transition. Promotes hypodermal terminal differentiation, together with transcription factor lin-29, perhaps as part of a transcriptional complex. Involved in regulating molting by repressing the expression of nuclear hormone receptors nhr-23 and nhr-25 in the adult hypoderm, probably acting in concert with lin-29. The chain is NAB transcription cofactor mab-10 from Caenorhabditis elegans.